The primary structure comprises 515 residues: MSDKVIIFDTTLRDGEQSPGASMTKDEKVRIARQLERLKVDVIEAGFAASSEGDFQAISAVAAAVKDSIVCSLARANDKDITRAADALQATNAKRIHAFLATSPLHMAVKLRMSPEEVLEQAKRSIRFACNLASDIEFSAEDGYRSEMDFLCRVVEAVINEGASTINIPDTVGYATPELYGEFIKTLRTRVPNSDKAVWSVHCHNDLGMAVANSLAGVKIGGARQIECTINGLGERAGNTALEEIVMSLRTRKDYFDMVCGIDATQIVPASKLVSQITGFIVQPNKAVVGANAFAHTSGIHQDGILKNRDTYEIMRAEDVGWSANKIVLGKLSGRNAFKQRLQELGITVEAEADLNVAFTRFKALADQKSEIFDEDIIAIMSDSAAAEEGEHYKFISLSQHSETGERPKSRVTFRMGDREISSEAEGNGPVDASLNAIEGIAKSGAEQLLYSVNAITSGTQSQGEVTVRLAKGGRIVNGVGTDPDIIAASAKAYLSALNKLHDPSQAKLNAQMTP.

The 264-residue stretch at 5–268 folds into the Pyruvate carboxyltransferase domain; that stretch reads VIIFDTTLRD…VCGIDATQIV (264 aa). The Mn(2+) site is built by Asp-14, His-202, His-204, and Asn-239. Positions 394 to 515 are regulatory domain; that stretch reads KFISLSQHSE…QAKLNAQMTP (122 aa).

It belongs to the alpha-IPM synthase/homocitrate synthase family. LeuA type 1 subfamily. As to quaternary structure, homodimer. Mn(2+) serves as cofactor.

The protein resides in the cytoplasm. The catalysed reaction is 3-methyl-2-oxobutanoate + acetyl-CoA + H2O = (2S)-2-isopropylmalate + CoA + H(+). The protein operates within amino-acid biosynthesis; L-leucine biosynthesis; L-leucine from 3-methyl-2-oxobutanoate: step 1/4. In terms of biological role, catalyzes the condensation of the acetyl group of acetyl-CoA with 3-methyl-2-oxobutanoate (2-ketoisovalerate) to form 3-carboxy-3-hydroxy-4-methylpentanoate (2-isopropylmalate). This Polynucleobacter necessarius subsp. necessarius (strain STIR1) protein is 2-isopropylmalate synthase.